We begin with the raw amino-acid sequence, 452 residues long: MTENEQIFWNRVLELAQSQLKQATFDFFVSDAKLLKVEGNIATILLDDMKKLFWEKNLQPVVLTAGFEVFNTEISIEYVFEETQSTSNSPQISQNKTAELATETLPFVQNDLNPKYSFDNFVIGDENRWAFTASVSVADLPGTTYNPLFIYGGPGLGKTHLLNAIGNSVLASNPKARIKYISAENFINEFVVHIRLQNMDELKKKFRNLDLLLIDDIQSLAKKSLAATQEEFFNTFNALHDNNKQIVLTSDRTPDDLNDLEQRLVTRFKWGLTVNITPPDFETRVAILNNKIQEYNYSFLSETIEYLAGQFDSNVRDLEGALKDISLVANFKKLDVITVEVAAEAIRARKQDSSPKMIVIPIEDIQKQVGKFYGVTVKEIKSTKRTQNIVLARQVGMYLAREMTDNSLPKIGKEFGGRDHSTVLHAYNKIKNMLAQDDSLKIEMETIKNKIK.

The interval 1–84 (MTENEQIFWN…SIEYVFEETQ (84 aa)) is domain I, interacts with DnaA modulators. Residues 84–110 (QSTSNSPQISQNKTAELATETLPFVQN) are domain II. The segment at 111–329 (DLNPKYSFDN…GALKDISLVA (219 aa)) is domain III, AAA+ region. 4 residues coordinate ATP: Gly-155, Gly-157, Lys-158, and Thr-159. The interval 330–452 (NFKKLDVITV…EMETIKNKIK (123 aa)) is domain IV, binds dsDNA.

Belongs to the DnaA family. Oligomerizes as a right-handed, spiral filament on DNA at oriC.

It localises to the cytoplasm. Functionally, plays an essential role in the initiation and regulation of chromosomal replication. ATP-DnaA binds to the origin of replication (oriC) to initiate formation of the DNA replication initiation complex once per cell cycle. Binds the DnaA box (a 9 base pair repeat at the origin) and separates the double-stranded (ds)DNA. Forms a right-handed helical filament on oriC DNA; dsDNA binds to the exterior of the filament while single-stranded (ss)DNA is stabiized in the filament's interior. The ATP-DnaA-oriC complex binds and stabilizes one strand of the AT-rich DNA unwinding element (DUE), permitting loading of DNA polymerase. After initiation quickly degrades to an ADP-DnaA complex that is not apt for DNA replication. Binds acidic phospholipids. The chain is Chromosomal replication initiator protein DnaA from Streptococcus mutans serotype c (strain ATCC 700610 / UA159).